The chain runs to 819 residues: DNA replication licensing factor Mcm3 (819 aa).

Positions 290 to 496 (IFELLSKSLA…DVDQMISDHV (207 aa)) constitute an MCM domain. Positions 348, 388, 389, 390, and 392 each coordinate ADP. Positions 472-475 (SRFD) match the Arginine finger motif. S522 bears the Phosphoserine mark. A Phosphotyrosine modification is found at Y538. A disordered region spans residues 655-717 (DRPSKRRRNS…DAGDLTRRET (63 aa)). Residues S664, S666, S680, and S682 each carry the phosphoserine modification. A phosphothreonine mark is found at T690 and T692. S697, S735, and S739 each carry phosphoserine.

It belongs to the MCM family. As to quaternary structure, component of the Mcm2-7 complex. The complex forms a toroidal hexameric ring with the proposed subunit order Mcm2-Mcm6-Mcm4-Mcm7-Mcm3-Mcm5.

Its subcellular location is the nucleus. The protein localises to the chromosome. The catalysed reaction is ATP + H2O = ADP + phosphate + H(+). In terms of biological role, acts as a component of the Mcm2-7 complex (Mcm complex) (Mcm complex) which is the putative replicative helicase essential for 'once per cell cycle' DNA replication initiation and elongation in eukaryotic cells. Core component of CDC45-MCM-GINS (CMG) helicase, the molecular machine that unwinds template DNA during replication, and around which the replisome is built. The active ATPase sites in the Mcm2-7 ring are formed through the interaction surfaces of two neighboring subunits such that a critical structure of a conserved arginine finger motif is provided in trans relative to the ATP-binding site of the Walker A box of the adjacent subunit. The six ATPase active sites, however, are likely to contribute differentially to the complex helicase activity. The protein is DNA replication licensing factor Mcm3 (Mcm3) of Drosophila melanogaster (Fruit fly).